The following is a 138-amino-acid chain: MGKKVLAVVKLALPAGKATPAPPVGPALGQYGVNLVMFTKEYNAKTADQIGLIIPAQITIYEDKSYSFILKTPPASVLLKRAAQIEKGSNNGTIVASITQEQLQQIALTKLPDLNTKDVKKAMSIISGTAANMGIQIL.

This sequence belongs to the universal ribosomal protein uL11 family. In terms of assembly, part of the ribosomal stalk of the 50S ribosomal subunit. Interacts with L10 and the large rRNA to form the base of the stalk. L10 forms an elongated spine to which L12 dimers bind in a sequential fashion forming a multimeric L10(L12)X complex.

It is found in the plastid. The protein localises to the chloroplast. Its function is as follows. Forms part of the ribosomal stalk which helps the ribosome interact with GTP-bound translation factors. The sequence is that of Large ribosomal subunit protein uL11c from Cyanidioschyzon merolae (strain NIES-3377 / 10D) (Unicellular red alga).